We begin with the raw amino-acid sequence, 469 residues long: Adenosylhomocysteinase (469 aa).

Substrate-binding residues include Thr-63, Asp-139, and Glu-164. NAD(+) is bound at residue 165-167 (TTT). 2 residues coordinate substrate: Lys-194 and Asp-198. NAD(+) is bound by residues Asn-199, 228 to 233 (GYGDVG), Glu-251, Asn-300, 321 to 323 (IGH), and Asn-375.

This sequence belongs to the adenosylhomocysteinase family. NAD(+) serves as cofactor.

Its subcellular location is the cytoplasm. It catalyses the reaction S-adenosyl-L-homocysteine + H2O = L-homocysteine + adenosine. The protein operates within amino-acid biosynthesis; L-homocysteine biosynthesis; L-homocysteine from S-adenosyl-L-homocysteine: step 1/1. In terms of biological role, may play a key role in the regulation of the intracellular concentration of adenosylhomocysteine. In Pseudomonas putida (strain GB-1), this protein is Adenosylhomocysteinase.